The chain runs to 534 residues: Glucans biosynthesis protein D (534 aa).

A signal peptide (tat-type signal) is located at residues 1–30; sequence MRMQRRHLLKNAAAALAALGLPALPQWALA.

Belongs to the OpgD/OpgG family. In terms of processing, predicted to be exported by the Tat system. The position of the signal peptide cleavage has not been experimentally proven.

The protein localises to the periplasm. It functions in the pathway glycan metabolism; osmoregulated periplasmic glucan (OPG) biosynthesis. Probably involved in the control of the structural glucose backbone of osmoregulated periplasmic glucans (OPGs). The sequence is that of Glucans biosynthesis protein D from Xanthomonas oryzae pv. oryzae (strain PXO99A).